A 437-amino-acid polypeptide reads, in one-letter code: tRNA-2-methylthio-N(6)-dimethylallyladenosine synthase (437 aa).

The MTTase N-terminal domain occupies 2 to 117 (KHLYIKTFGC…LPQMIQRALD (116 aa)). Residues cysteine 11, cysteine 48, cysteine 80, cysteine 154, cysteine 158, and cysteine 161 each contribute to the [4Fe-4S] cluster site. The region spanning 140–372 (RAQGVVGQVT…QQLLNTQQLQ (233 aa)) is the Radical SAM core domain. The TRAM domain maps to 375 to 437 (KARVGRRESV…LPNSLRGRLV (63 aa)).

It belongs to the methylthiotransferase family. MiaB subfamily. Monomer. The cofactor is [4Fe-4S] cluster.

It is found in the cytoplasm. It catalyses the reaction N(6)-dimethylallyladenosine(37) in tRNA + (sulfur carrier)-SH + AH2 + 2 S-adenosyl-L-methionine = 2-methylsulfanyl-N(6)-dimethylallyladenosine(37) in tRNA + (sulfur carrier)-H + 5'-deoxyadenosine + L-methionine + A + S-adenosyl-L-homocysteine + 2 H(+). Functionally, catalyzes the methylthiolation of N6-(dimethylallyl)adenosine (i(6)A), leading to the formation of 2-methylthio-N6-(dimethylallyl)adenosine (ms(2)i(6)A) at position 37 in tRNAs that read codons beginning with uridine. This Magnetococcus marinus (strain ATCC BAA-1437 / JCM 17883 / MC-1) protein is tRNA-2-methylthio-N(6)-dimethylallyladenosine synthase.